We begin with the raw amino-acid sequence, 186 residues long: Archaemetzincin (186 aa).

Zn(2+) is bound at residue H136. E137 functions as the Proton acceptor in the catalytic mechanism. The Zn(2+) site is built by H140, H146, C147, C152, C171, and C174.

The protein belongs to the peptidase M54 family. In terms of assembly, monomer. The cofactor is Zn(2+).

Probable zinc metalloprotease whose natural substrate is unknown. The sequence is that of Archaemetzincin from Thermococcus kodakarensis (strain ATCC BAA-918 / JCM 12380 / KOD1) (Pyrococcus kodakaraensis (strain KOD1)).